The primary structure comprises 2036 residues: Putative mediator of RNA polymerase II transcription subunit 24 (2036 aa).

Disordered stretches follow at residues 51-70 (NNNNSNNNNNNNNNNNNNNV), 159-184 (DNIENSNNNNNNNNNNNNNNSNNNIG), 212-451 (SPSP…QTTT), 501-580 (KSVN…NNNN), 754-840 (NLKN…SHQK), 928-1124 (NNNN…NKDL), 1375-1419 (NNKN…NNNN), and 1565-1608 (NSSA…NGDT). A compositionally biased stretch (low complexity) spans 212–229 (SPSPSSSSSSSTSPSSQQ). Residues 260–270 (EIMKVKEEPIK) show a composition bias toward basic and acidic residues. Low complexity-rich tracts occupy residues 273 to 291 (TTTTTTSTTTTTSTTSTTT), 300 to 311 (TNGNGEETTITT), 387 to 451 (QPQP…QTTT), 501 to 539 (KSVNNNNNNNNNNNNNNNNNNNNNYNNNNNDSMDQNSNN), 547 to 580 (NNNNINNNNNNNNNNNNNNNNNNNNNNNNNNNNN), and 754 to 770 (NLKNNKNNNNNNNNSNG). Residues 505-584 (NNNNNNNNNN…NNNNNNINNI (80 aa)) are a coiled coil. The segment covering 778–787 (GSSTDGSNKL) has biased composition (polar residues). Composition is skewed to low complexity over residues 788-808 (SSTNIEEGNNNNNSSTHLNGN) and 928-943 (NNNNNTNTNNINNNKN). Residues 943–977 (NKNSKKSNNKNKNNKNNNKKNKNNNNNNNNNNNNN) adopt a coiled-coil conformation. The span at 944 to 964 (KNSKKSNNKNKNNKNNNKKNK) shows a compositional bias: basic residues. Low complexity-rich tracts occupy residues 965–999 (NNNNNNNNNNNNNNNNNNNNNNNNNNNNNNNNNNN), 1017–1118 (NNNN…NNNN), 1385–1419 (SNNSSNNSINNINNNNNNNNNNNNNNNNNNNNNNN), 1565–1584 (NSSAYSTTTTTSASTSLPKS), and 1594–1608 (SSNTSTTTTKNNGDT). Residues 1915–1968 (SKNQSLKKKQKLKQKKQQHNNNNGGEYNIDQDHIEQIQQQQQQYQKQQQQRKDE) adopt a coiled-coil conformation.

Belongs to the Mediator complex subunit 24 family. Component of the Mediator complex.

It is found in the nucleus. Functionally, component of the Mediator complex, a coactivator involved in the regulated transcription of nearly all RNA polymerase II-dependent genes. Mediator functions as a bridge to convey information from gene-specific regulatory proteins to the basal RNA polymerase II transcription machinery. Mediator is recruited to promoters by direct interactions with regulatory proteins and serves as a scaffold for the assembly of a functional preinitiation complex with RNA polymerase II and the general transcription factors. The polypeptide is Putative mediator of RNA polymerase II transcription subunit 24 (med24) (Dictyostelium discoideum (Social amoeba)).